A 306-amino-acid chain; its full sequence is MPKSEIRKLLQEIKKQVDNPGNSSTTEIKKMASEAGIDEKTAEEIYHLLTEFYQAVEEHGGIEKYMHSNISWLKIELELLSACYQIAILEDMKVLDISEMLSLNDLRIFPKTPSQLQNTYYKLKKELIQVEDIPKNKPGRKRKTQKNTKKEKTNIFGKVVPAEFKAPTSIKEQISYDKSREKNLVDLLSGVKSNVQLLSENQGEENNVYDLLKSIYSLSSLAVQKEELDKKYQDLQTKCQELEQENSYLKQQNETMTDSFHTLVLQVADFAYASDLDQIQALPLFSQQLVVTLNQLGVFKENYKQM.

The protein resides in the cytoplasm. Its function is as follows. Transcriptional repressor of flagellar motility genes, such as flaA, during extracellular growth at 37 degrees Celsius and during intracellular infection. Binds directly to gene promoter region and probably prevents RNA polymerase binding. At low temperatures, MogR repression activity is modulated by the DegU response regulator in an unknown mechanism. Required for full virulence. The sequence is that of Motility gene repressor MogR (mogR) from Listeria monocytogenes serotype 4b (strain F2365).